The chain runs to 115 residues: U3-lycotoxin-Ls1k (115 aa).

The N-terminal stretch at 1–20 is a signal peptide; sequence MKFELLFGVLLVTLFSYSSA. A propeptide spanning residues 21-44 is cleaved from the precursor; sequence EMLDDFDQADEDELLSLIEKEEAR. 4 disulfide bridges follow: C48–C63, C55–C72, C62–C87, and C74–C85.

This sequence belongs to the neurotoxin 19 (CSTX) family. 01 subfamily. Expressed by the venom gland.

It localises to the secreted. The polypeptide is U3-lycotoxin-Ls1k (Lycosa singoriensis (Wolf spider)).